The following is a 726-amino-acid chain: Peroxisomal bifunctional enzyme (726 aa).

The segment at 1-284 (MAEYLRLPHS…FAERSAPKWS (284 aa)) is enoyl-CoA hydratase / isomerase. Lys-38 carries the post-translational modification N6-succinyllysine. A substrate-binding site is contributed by Gly-103. Lys-167 bears the N6-acetyllysine; alternate mark. Lys-167 carries the post-translational modification N6-succinyllysine; alternate. Lys-173 carries the N6-acetyllysine modification. Lys-185 carries the N6-succinyllysine modification. An N6-acetyllysine; alternate modification is found at Lys-221. The residue at position 221 (Lys-221) is an N6-succinyllysine; alternate. Lys-282, Lys-292, and Lys-333 each carry N6-succinyllysine. The segment at 285 to 575 (TPSGASWKTA…DMLCELGRFG (291 aa)) is 3-hydroxyacyl-CoA dehydrogenase. N6-acetyllysine is present on residues Lys-348 and Lys-352. Positions 352–371 (KSRQQCGQQRSGPKPRFSSS) are disordered. The segment covering 353-371 (SRQQCGQQRSGPKPRFSSS) has biased composition (polar residues). Lys-467 carries the post-translational modification N6-acetyllysine. Lys-535 is modified (N6-succinyllysine). Lys-587, Lys-594, and Lys-713 each carry N6-acetyllysine; alternate. Residues Lys-587, Lys-594, and Lys-713 each carry the N6-succinyllysine; alternate modification. The Microbody targeting signal motif lies at 724 to 726 (SKL). Lys-725 bears the N6-succinyllysine mark.

This sequence in the N-terminal section; belongs to the enoyl-CoA hydratase/isomerase family. It in the C-terminal section; belongs to the 3-hydroxyacyl-CoA dehydrogenase family. In terms of assembly, monomer. Acetylated, leading to enhanced enzyme activity. Acetylation is enhanced by up to 80% after treatment either with trichostin A (TSA) or with nicotinamide (NAM) with highest increase on Lys-348. Acetylation and enzyme activity increased by about 1.5% on addition of fatty acids.

The protein resides in the peroxisome. The enzyme catalyses a (3S)-3-hydroxyacyl-CoA = a (2E)-enoyl-CoA + H2O. It catalyses the reaction a 4-saturated-(3S)-3-hydroxyacyl-CoA = a (3E)-enoyl-CoA + H2O. The catalysed reaction is a (3Z)-enoyl-CoA = a 4-saturated (2E)-enoyl-CoA. It carries out the reaction a (3E)-enoyl-CoA = a 4-saturated (2E)-enoyl-CoA. The enzyme catalyses a (3S)-3-hydroxyacyl-CoA + NAD(+) = a 3-oxoacyl-CoA + NADH + H(+). It catalyses the reaction (2S,3S)-3-hydroxy-2-methylbutanoyl-CoA = (2E)-2-methylbut-2-enoyl-CoA + H2O. The catalysed reaction is (3S)-hydroxyhexadecanoyl-CoA + NAD(+) = 3-oxohexadecanoyl-CoA + NADH + H(+). It carries out the reaction (3S)-hydroxyhexadecanoyl-CoA = (2E)-hexadecenoyl-CoA + H2O. The enzyme catalyses (2E)-hexadecenedioyl-CoA + H2O = (3S)-hydroxyhexadecanedioyl-CoA. It catalyses the reaction (3S)-hydroxyhexadecanedioyl-CoA + NAD(+) = 3-oxohexadecanedioyl-CoA + NADH + H(+). The catalysed reaction is (3E,5Z)-tetradecadienoyl-CoA = (2E,5Z)-tetradecadienoyl-CoA. It carries out the reaction (3E,5Z)-octadienoyl-CoA = (2E,5Z)-octadienoyl-CoA. The enzyme catalyses (3S)-hydroxydecanoyl-CoA + NAD(+) = 3-oxodecanoyl-CoA + NADH + H(+). It catalyses the reaction (3E)-decenoyl-CoA = (2E)-decenoyl-CoA. The catalysed reaction is (3Z)-hexenoyl-CoA = (2E)-hexenoyl-CoA. It carries out the reaction (3E)-hexenoyl-CoA = (2E)-hexenoyl-CoA. The enzyme catalyses (3S)-hydroxydecanoyl-CoA = (2E)-decenoyl-CoA + H2O. It catalyses the reaction (3S)-hydroxyhexanoyl-CoA = (2E)-hexenoyl-CoA + H2O. The protein operates within lipid metabolism; fatty acid beta-oxidation. With respect to regulation, enzyme activity enhanced by acetylation. Peroxisomal trifunctional enzyme possessing 2-enoyl-CoA hydratase, 3-hydroxyacyl-CoA dehydrogenase, and delta 3, delta 2-enoyl-CoA isomerase activities. Catalyzes two of the four reactions of the long chain fatty acids peroxisomal beta-oxidation pathway. Can also use branched-chain fatty acids such as 2-methyl-2E-butenoyl-CoA as a substrate, which is hydrated into (2S,3S)-3-hydroxy-2-methylbutanoyl-CoA. Optimal isomerase for 2,5 double bonds into 3,5 form isomerization in a range of enoyl-CoA species. Also able to isomerize both 3-cis and 3-trans double bonds into the 2-trans form in a range of enoyl-CoA species. Regulates the amount of medium-chain dicarboxylic fatty acids which are essential regulators of all fatty acid oxidation pathways. Also involved in the degradation of long-chain dicarboxylic acids through peroxisomal beta-oxidation. The sequence is that of Peroxisomal bifunctional enzyme (EHHADH) from Cavia porcellus (Guinea pig).